The following is a 509-amino-acid chain: Dol-P-Glc:Glc(2)Man(9)GlcNAc(2)-PP-Dol alpha-1,2-glucosyltransferase (509 aa).

The Cytoplasmic segment spans residues 1–4 (MGKL). A helical membrane pass occupies residues 5 to 25 (AVAAITSLWVIPMSIIVNHIV). Topologically, residues 26–57 (PEPYMDEIFHVPQAQQYCNGNFRSWDPMITTP) are lumenal. A helical membrane pass occupies residues 58–78 (PGLYYLSLAHVASLFPGMLLM). Residues 79–99 (ENTSQSFSEACSTSVLRSTNA) lie on the Cytoplasmic side of the membrane. A helical membrane pass occupies residues 100–120 (VSAVLCGVLVYEIIRFLGPNL). At 121–124 (SDRK) the chain is on the lumenal side. The helical transmembrane segment at 125 to 145 (ATFMALVMSLYPLHWFFTFLY) threads the bilayer. At 146-170 (YTDVASLTAVLAMYLTCLKRRYVLS) the chain is on the cytoplasmic side. Residues 171 to 191 (ALFGTLAVFIRQTNVVWMLFV) traverse the membrane as a helical segment. The Lumenal portion of the chain corresponds to 192–285 (ACSGILDFTL…KWRILIKFSP (94 aa)). The tract at residues 210 to 254 (QEVNQELHQSSNKKGATLRSNLRKRKSDISSDTSDPFNHGQTVPS) is disordered. Polar residues-rich tracts occupy residues 215-229 (ELHQ…TLRS) and 239-254 (SSDT…TVPS). The chain crosses the membrane as a helical span at residues 286-306 (FIFVVVAFGIFILWNGGIVLG). Residues 307-311 (AKEAH) are Cytoplasmic-facing. Residues 312–332 (VVSLHFAQIMYFSLVSALFTA) traverse the membrane as a helical segment. Residues 333–355 (PLHFSVNQLRHQFHQLHRNWSLS) lie on the Lumenal side of the membrane. N351 carries an N-linked (GlcNAc...) asparagine glycan. The helical transmembrane segment at 356 to 376 (LILTLVALVAGFVSVHFFSLA) threads the bilayer. The Cytoplasmic portion of the chain corresponds to 377 to 400 (HPYLLADNRHYPFYLWRKIINAHW). The helical transmembrane segment at 401 to 421 (LMKYILVPVYVYSWFSILTLL) threads the bilayer. The Lumenal portion of the chain corresponds to 422–428 (AKTRRQT). The chain crosses the membrane as a helical span at residues 429-449 (WILVYFLATCGVLVPTPLIEF). At 450–472 (RYYTIPFYLFMLHSCVRSSSFAT) the chain is on the cytoplasmic side. A helical membrane pass occupies residues 473–493 (WLLIGTIFVSINVFTMAMFLF). Topologically, residues 494–509 (RPFKWSHEDGVQRFIW) are lumenal.

It belongs to the ALG10 glucosyltransferase family.

The protein resides in the endoplasmic reticulum membrane. The enzyme catalyses an alpha-D-Glc-(1-&gt;3)-alpha-D-Glc-(1-&gt;3)-alpha-D-Man-(1-&gt;2)-alpha-D-Man-(1-&gt;2)-alpha-D-Man-(1-&gt;3)-[alpha-D-Man-(1-&gt;2)-alpha-D-Man-(1-&gt;3)-[alpha-D-Man-(1-&gt;2)-alpha-D-Man-(1-&gt;6)]-alpha-D-Man-(1-&gt;6)]-beta-D-Man-(1-&gt;4)-beta-D-GlcNAc-(1-&gt;4)-alpha-D-GlcNAc-diphospho-di-trans,poly-cis-dolichol + a di-trans,poly-cis-dolichyl beta-D-glucosyl phosphate = a alpha-D-Glc-(1-&gt;2)-alpha-D-Glc-(1-&gt;3)-alpha-D-Glc-(1-&gt;3)-alpha-D-Man-(1-&gt;2)-alpha-D-Man-(1-&gt;2)-alpha-D-Man-(1-&gt;3)-[alpha-D-Man-(1-&gt;2)-alpha-D-Man-(1-&gt;3)-[alpha-D-Man-(1-&gt;2)-alpha-D-Man-(1-&gt;6)]-alpha-D-Man-(1-&gt;6)]-beta-D-Man-(1-&gt;4)-beta-D-GlcNAc-(1-&gt;4)-alpha-D-GlcNAc-diphospho-di-trans,poly-cis-dolichol + a di-trans,poly-cis-dolichyl phosphate + H(+). It functions in the pathway protein modification; protein glycosylation. Its function is as follows. Dol-P-Glc:Glc(2)Man(9)GlcNAc(2)-PP-Dol alpha-1,2-glucosyltransferase that operates in the biosynthetic pathway of dolichol-linked oligosaccharides, the glycan precursors employed in protein asparagine (N)-glycosylation. The assembly of dolichol-linked oligosaccharides begins on the cytosolic side of the endoplasmic reticulum membrane and finishes in its lumen. The sequential addition of sugars to dolichol pyrophosphate produces dolichol-linked oligosaccharides containing fourteen sugars, including two GlcNAcs, nine mannoses and three glucoses. Once assembled, the oligosaccharide is transferred from the lipid to nascent proteins by oligosaccharyltransferases. In the lumen of the endoplasmic reticulum, adds the third and last glucose residue from dolichyl phosphate glucose (Dol-P-Glc) onto the lipid-linked oligosaccharide intermediate Glc(2)Man(9)GlcNAc(2)-PP-Dol to produce Glc(3)Man(9)GlcNAc(2)-PP-Dol. This Arabidopsis thaliana (Mouse-ear cress) protein is Dol-P-Glc:Glc(2)Man(9)GlcNAc(2)-PP-Dol alpha-1,2-glucosyltransferase.